A 498-amino-acid polypeptide reads, in one-letter code: UDP-N-acetylmuramate--L-alanine ligase (498 aa).

An ATP-binding site is contributed by 120-126; that stretch reads GSHGKTT.

It belongs to the MurCDEF family.

Its subcellular location is the cytoplasm. It catalyses the reaction UDP-N-acetyl-alpha-D-muramate + L-alanine + ATP = UDP-N-acetyl-alpha-D-muramoyl-L-alanine + ADP + phosphate + H(+). The protein operates within cell wall biogenesis; peptidoglycan biosynthesis. Cell wall formation. In Rickettsia typhi (strain ATCC VR-144 / Wilmington), this protein is UDP-N-acetylmuramate--L-alanine ligase.